The sequence spans 807 residues: G-type lectin S-receptor-like serine/threonine-protein kinase At1g61420 (807 aa).

Residues 1–24 (MGKKWIVFFAYLLLSSFFISSSSA) form the signal peptide. Positions 25–144 (GITKESPLPI…FSGRTLWQSF (120 aa)) constitute a Bulb-type lectin domain. Over 25-426 (GITKESPLPI…ELGGNKRKKA (402 aa)) the chain is Extracellular. Asn-53, Asn-94, Asn-117, Asn-134, Asn-236, and Asn-267 each carry an N-linked (GlcNAc...) asparagine glycan. An EGF-like; atypical domain is found at 278 to 314 (PEHSCDYYGVCGPFGLCVKSVPPKCTCFKGFVPKLIE). 2 cysteine pairs are disulfide-bonded: Cys-282–Cys-294 and Cys-288–Cys-302. 3 N-linked (GlcNAc...) asparagine glycosylation sites follow: Asn-320, Asn-336, and Asn-375. A PAN domain is found at 333–413 (CQGNSTGKYA…EGGELLSIRL (81 aa)). Intrachain disulfides connect Cys-368-Cys-389 and Cys-372-Cys-378. Residues 427–447 (ITASIVSLSLVVIIAFVAFCF) traverse the membrane as a helical segment. Topologically, residues 448 to 807 (WRYRVKHNAD…EMTKSVILGR (360 aa)) are cytoplasmic. The Protein kinase domain maps to 494-779 (FSISNKLGQG…DLPPPEQPTF (286 aa)). Residues 500–508 (LGQGGFGPV) and Lys-522 each bind ATP. Residues Ser-528 and Ser-543 each carry the phosphoserine modification. A caM-binding region spans residues 583–600 (RKRLEIDWPKRLDIIQGI). Asp-619 functions as the Proton acceptor in the catalytic mechanism. A phosphoserine mark is found at Ser-623 and Ser-636. At Thr-653 the chain carries Phosphothreonine. Residues Ser-696 and Ser-790 each carry the phosphoserine modification.

Belongs to the protein kinase superfamily. Ser/Thr protein kinase family.

The protein localises to the cell membrane. The enzyme catalyses L-seryl-[protein] + ATP = O-phospho-L-seryl-[protein] + ADP + H(+). It catalyses the reaction L-threonyl-[protein] + ATP = O-phospho-L-threonyl-[protein] + ADP + H(+). In Arabidopsis thaliana (Mouse-ear cress), this protein is G-type lectin S-receptor-like serine/threonine-protein kinase At1g61420.